Reading from the N-terminus, the 1025-residue chain is Error-prone DNA polymerase (1025 aa).

The protein belongs to the DNA polymerase type-C family. DnaE2 subfamily.

It localises to the cytoplasm. The catalysed reaction is DNA(n) + a 2'-deoxyribonucleoside 5'-triphosphate = DNA(n+1) + diphosphate. Functionally, DNA polymerase involved in damage-induced mutagenesis and translesion synthesis (TLS). It is not the major replicative DNA polymerase. The polypeptide is Error-prone DNA polymerase (Alkalilimnicola ehrlichii (strain ATCC BAA-1101 / DSM 17681 / MLHE-1)).